The following is a 461-amino-acid chain: A-type ATP synthase subunit B (461 aa).

The protein belongs to the ATPase alpha/beta chains family. Has multiple subunits with at least A(3), B(3), C, D, E, F, H, I and proteolipid K(x).

The protein localises to the cell membrane. Its function is as follows. Component of the A-type ATP synthase that produces ATP from ADP in the presence of a proton gradient across the membrane. The B chain is a regulatory subunit. This chain is A-type ATP synthase subunit B, found in Methanoculleus marisnigri (strain ATCC 35101 / DSM 1498 / JR1).